Here is a 942-residue protein sequence, read N- to C-terminus: ATP-dependent RNA helicase DDX42 (942 aa).

The segment covering 1-18 has biased composition (gly residues); the sequence is MNWNKGGPGTKRGFGFGG. Positions 1 to 114 are disordered; sequence MNWNKGGPGT…KPIDSDSDDD (114 aa). Lys-5 carries the post-translational modification N6-acetyllysine. Omega-N-methylarginine is present on Arg-12. A compositionally biased stretch (low complexity) spans 35–52; it reads SHSAFGATSSSSGFGKSA. Position 58 is a phosphoserine (Ser-58). Over residues 70 to 84 the composition is skewed to acidic residues; it reads DEENAYFEDEEEDSS. Residues Ser-96, Ser-104, Ser-109, and Ser-111 each carry the phosphoserine modification. Residues 116–157 are a coiled coil; it reads LEAFMAEVEDQAARDMKRLEEKDKERKNVKGIRDDIEEEDDQ. Residues 182–203 are disordered; sequence EYDSDGNPIAPTKKIIDPLPPI. Ser-185 bears the Phosphoserine mark. The Q motif signature appears at 253 to 281; the sequence is SSFAHFGFDEQLMHQIRKSEYTQPTPIQC. One can recognise a Helicase ATP-binding domain in the interval 284–459; it reads VPVALSGRDM…RDILIDPIRV (176 aa). Residue 297–304 coordinates ATP; that stretch reads AKTGSGKT. The DEAD box motif lies at 407–410; sequence DEAD. The Helicase C-terminal domain occupies 487–632; it reads WLTRRLVEFT…HVSKELLDLA (146 aa). Composition is skewed to polar residues over residues 737-760 and 786-798; these read LNSV…TSAT and GVNN…NSRE. Disordered regions lie at residues 737 to 762 and 783 to 942; these read LNSV…ATKG and GAQG…RWDS. The tract at residues 738-833 is necessary for interaction with TP53BP2; sequence NSVPTNSAQQ…TGNRHSDSPR (96 aa). Ser-754 carries the post-translational modification Phosphoserine. A compositionally biased stretch (basic and acidic residues) spans 820–924; it reads SHGETGNRHS…KVDSKTDKTA (105 aa). A Glycyl lysine isopeptide (Lys-Gly) (interchain with G-Cter in SUMO2) cross-link involves residue Lys-899.

Belongs to the DEAD box helicase family. DDX42 subfamily. As to quaternary structure, transient component of the SF3B subcomplex of the 17S U2 SnRNP complex. Interacts (via the C-terminus) with TP53BP2; the interaction is not inhibitied by TP53BP2 ubiquitination and is independent of p53/TP53.

It is found in the cytoplasm. Its subcellular location is the nucleus. The enzyme catalyses ATP + H2O = ADP + phosphate + H(+). ATP-dependent RNA helicase that binds to partially double-stranded RNAs (dsRNAs) in order to unwind RNA secondary structures. Unwinding is promoted in the presence of single-strand binding proteins. Also mediates RNA duplex formation thereby displacing the single-strand RNA binding protein. ATP and ADP modulate its activity: ATP binding and hydrolysis by DDX42 triggers RNA strand separation, whereas the ADP-bound form of the protein triggers annealing of complementary RNA strands. Required for assembly of the 17S U2 SnRNP complex of the spliceosome, a large ribonucleoprotein complex that removes introns from transcribed pre-mRNAs: DDX42 associates transiently with the SF3B subcomplex of the 17S U2 SnRNP complex and is released after fulfilling its role in the assembly of 17S U2 SnRNP. Involved in the survival of cells by interacting with TP53BP2 and thereby counteracting the apoptosis-stimulating activity of TP53BP2. Relocalizes TP53BP2 to the cytoplasm. This Pongo abelii (Sumatran orangutan) protein is ATP-dependent RNA helicase DDX42 (DDX42).